The following is a 172-amino-acid chain: Shikimate kinase (172 aa).

Position 14 to 19 (14 to 19 (GAGKST)) interacts with ATP. Serine 18 contributes to the Mg(2+) binding site. Substrate is bound by residues aspartate 36, arginine 60, and glycine 82. Arginine 120 lines the ATP pocket. Arginine 139 contributes to the substrate binding site. Glutamine 156 lines the ATP pocket.

This sequence belongs to the shikimate kinase family. As to quaternary structure, monomer. Mg(2+) is required as a cofactor.

The protein localises to the cytoplasm. The catalysed reaction is shikimate + ATP = 3-phosphoshikimate + ADP + H(+). The protein operates within metabolic intermediate biosynthesis; chorismate biosynthesis; chorismate from D-erythrose 4-phosphate and phosphoenolpyruvate: step 5/7. In terms of biological role, catalyzes the specific phosphorylation of the 3-hydroxyl group of shikimic acid using ATP as a cosubstrate. The polypeptide is Shikimate kinase (Vibrio parahaemolyticus serotype O3:K6 (strain RIMD 2210633)).